A 453-amino-acid chain; its full sequence is DNA repair protein RadA (453 aa).

A C4-type zinc finger spans residues 11–28 (CNQCGATAPKWLGQCPGC). 93-100 (GDPGIGKS) lines the ATP pocket. Positions 250 to 254 (KNRFG) match the RadA KNRFG motif motif. The tract at residues 349 to 453 (DVFLSITGGL…TIKDAIRLLL (105 aa)) is lon-protease-like.

The protein belongs to the RecA family. RadA subfamily.

In terms of biological role, DNA-dependent ATPase involved in processing of recombination intermediates, plays a role in repairing DNA breaks. Stimulates the branch migration of RecA-mediated strand transfer reactions, allowing the 3' invading strand to extend heteroduplex DNA faster. Binds ssDNA in the presence of ADP but not other nucleotides, has ATPase activity that is stimulated by ssDNA and various branched DNA structures, but inhibited by SSB. Does not have RecA's homology-searching function. This is DNA repair protein RadA from Chlamydia pneumoniae (Chlamydophila pneumoniae).